Here is a 270-residue protein sequence, read N- to C-terminus: MGQKVNPHGFRLGVTTDFKSRWFADKLYKDYVKEDVAIRQMLTRGMERAGISKVEIERTRERVRVDVHTARPGIVIGRRGAEADRIRANLEKLTNKQVQLNILEVKNPEIDAQLVAQGVAEQLSSRVAFRRAMRKAIQSAMKSGAKGIRVQCSGRLGGAEMSRSEFYREGRVPLHTLRADIDYGFFEARTTFGRIGVKVWIYKGEAPMTRAEREAAQAAQRAAGPQRRERPGRRRRGGGGGGGQQQQQAEKATAQATEAAKAAKSGNEGS.

The region spanning Ile38–Lys106 is the KH type-2 domain. Residues Glu212–Ser270 form a disordered region. Low complexity-rich tracts occupy residues Ala216–Pro225 and Gln245–Ala263.

Belongs to the universal ribosomal protein uS3 family. In terms of assembly, part of the 30S ribosomal subunit. Forms a tight complex with proteins S10 and S14.

Its function is as follows. Binds the lower part of the 30S subunit head. Binds mRNA in the 70S ribosome, positioning it for translation. This Thermobifida fusca (strain YX) protein is Small ribosomal subunit protein uS3.